A 31-amino-acid chain; its full sequence is Cyclotide psybry C (31 aa).

Residues 1–31 constitute a cross-link (cyclopeptide (Gly-Asn)); sequence GFNPCGETCQIDQTCHAPGCTCSIANICVRN. Intrachain disulfides connect cysteine 5-cysteine 20, cysteine 9-cysteine 22, and cysteine 15-cysteine 28.

In terms of processing, this is a cyclic peptide.

Functionally, probably participates in a plant defense mechanism. The sequence is that of Cyclotide psybry C from Psychotria brachyceras.